We begin with the raw amino-acid sequence, 384 residues long: Putative 8-amino-7-oxononanoate synthase (384 aa).

Arg18 contributes to the substrate binding site. 105–106 (GY) is a binding site for pyridoxal 5'-phosphate. His130 lines the substrate pocket. Pyridoxal 5'-phosphate-binding positions include Ser176, 201 to 204 (DDAH), and 233 to 236 (TLSK). Position 236 is an N6-(pyridoxal phosphate)lysine (Lys236). Substrate is bound at residue Thr349.

Belongs to the class-II pyridoxal-phosphate-dependent aminotransferase family. BioF subfamily. In terms of assembly, homodimer. Requires pyridoxal 5'-phosphate as cofactor.

The enzyme catalyses 6-carboxyhexanoyl-[ACP] + L-alanine + H(+) = (8S)-8-amino-7-oxononanoate + holo-[ACP] + CO2. It functions in the pathway cofactor biosynthesis; biotin biosynthesis. In terms of biological role, catalyzes the decarboxylative condensation of pimeloyl-[acyl-carrier protein] and L-alanine to produce 8-amino-7-oxononanoate (AON), [acyl-carrier protein], and carbon dioxide. The polypeptide is Putative 8-amino-7-oxononanoate synthase (bioF) (Desulfovibrio desulfuricans (strain ATCC 27774 / DSM 6949 / MB)).